A 261-amino-acid chain; its full sequence is MGKAVSQLTSRKDEDKPILPDNPAMASQAANYFSTGSSKPAHSCMPYEKAASSSFVTCPTCQGNGEIPQEQEKQLVALIPYGDQRLKPRRTKLFVFLSVAICLLIFSLTIFFLYPRPIAVRPVGLNSSTVTFEDAHVQLNTTNVLNIFNSNFYPITVTQLTAEVLHQASVVGQVTSSLRLHIGPLASEQMPYEVASRILDENTYKICTWPKIRVHHILLNIQGSLTCSFLSHPQQLPFESFEYVDCRENMSLPHLELPRPA.

Positions 1-23 (MGKAVSQLTSRKDEDKPILPDNP) are disordered. A helical membrane pass occupies residues 93–113 (LFVFLSVAICLLIFSLTIFFL).

This sequence belongs to the TMEM106 family. Expressed in liver, spleen, lung, kidney, lymph nodes and adipose tissue (at protein level). Expressed by macrophages.

The protein resides in the cell membrane. Activates macrophages and polarizes them into M1-like macrophages through the activation of the MAPK and NF-kappaB signaling pathway. Upon activation, up-regulates the expression of CD80, CD86, CD69 and MHC II on macrophages, and induces the release of pro-inflammatory cytokines such as TNF, IL1B, IL6, CCL2 and nitric oxide. May play a role in inhibition of proliferation and migration. The protein is Transmembrane protein 106A (Tmem106a) of Mus musculus (Mouse).